The sequence spans 931 residues: Protocadherin gamma-A1 (931 aa).

Positions 1 to 28 are cleaved as a signal peptide; sequence MKIQKKLTGCSRLMLLCLSLELLLEAGA. Cadherin domains follow at residues 29–133, 134–242, 243–347, 348–452, 453–562, and 570–682; these read GNIH…TPQF, QLEE…PPAF, TQAQ…APEV, TITS…SPVF, HQDS…APEI, and DGST…EPSA. Residues 29–692 lie on the Extracellular side of the membrane; it reads GNIHYSVPEE…KPNDSDLTLY (664 aa). Asparagine 265, asparagine 419, and asparagine 545 each carry an N-linked (GlcNAc...) asparagine glycan. Asparagine 685 carries an N-linked (GlcNAc...) asparagine glycan. A helical transmembrane segment spans residues 693–713; that stretch reads LVVAAAAVSCVFLAFVIVLLA. Over 714–931 the chain is Cytoplasmic; that stretch reads HRLRRWHKSR…KKKSGKKEKK (218 aa). Disordered regions lie at residues 801-840 and 901-931; these read KKEP…WPNN and ATLT…KEKK. Residues 805-840 are compositionally biased toward polar residues; sequence FSQQAPPNTDWRFSQAQRPGTSGSQNGDDTGTWPNN. The span at 921-931 shows a compositional bias: basic residues; that stretch reads NKKKSGKKEKK.

The protein resides in the cell membrane. In terms of biological role, potential calcium-dependent cell-adhesion protein. May be involved in the establishment and maintenance of specific neuronal connections in the brain. The polypeptide is Protocadherin gamma-A1 (PCDHGA1) (Homo sapiens (Human)).